Here is a 342-residue protein sequence, read N- to C-terminus: Nicotinate-nucleotide--dimethylbenzimidazole phosphoribosyltransferase (342 aa).

The active-site Proton acceptor is E311.

This sequence belongs to the CobT family.

It carries out the reaction 5,6-dimethylbenzimidazole + nicotinate beta-D-ribonucleotide = alpha-ribazole 5'-phosphate + nicotinate + H(+). It functions in the pathway nucleoside biosynthesis; alpha-ribazole biosynthesis; alpha-ribazole from 5,6-dimethylbenzimidazole: step 1/2. In terms of biological role, catalyzes the synthesis of alpha-ribazole-5'-phosphate from nicotinate mononucleotide (NAMN) and 5,6-dimethylbenzimidazole (DMB). The polypeptide is Nicotinate-nucleotide--dimethylbenzimidazole phosphoribosyltransferase (Vibrio vulnificus (strain CMCP6)).